A 599-amino-acid polypeptide reads, in one-letter code: MLVRKLTLIGAALARAALALQQEDFVVNGELLPGVREIDRAEVPEMHAGLMPLEEDEDGRALFFWRMGEQCGKRCSNELIVWLNGGPGCSSMDGALMETGAFRVAEDGKLYLNSGSWHTRGTMLFVDQPVGTGFSRPGRDGRLRTELSQLADDFLLFMERYYAVFPEDRRRTLVLAGESYAGQYLPYFADAVVRRNAERAPEERYKLQNVMIGNGWVDPDLQSLSYVPFVSSRGLFGPETRNFQDILRDQEACQNAINHGPAKGFSHPECEGILPKLLSSIPGPDRPVQQCINMYDIRLRDVFPSCGMNWPADLPNVHKFFGTPGVLEALHVDPQVAGPWVECKSAVSEALVNAHSRPSVHLIPGLIEAGVKFVFFNGDQDVICNNMGVEMLIAELRWRGHMGFSNATENFDWYHSDADAKTLVAAGVVKRDGPVTFISVFNASHMVPFDVPRISRGIIDIERSATILGVKGDSRMLITVDTEEDVTLSTNAERNQQIRHNQLKRLNGDTRKFTIAVFGLTISSIIGVIVYFSMRLHYGAKIRAILTNPKSGTSSADDFSMDDEYTGTVMGDFHHGTHKKGQYYAVPDTDISSSELHSV.

A signal peptide spans 1-19 (MLVRKLTLIGAALARAALA). At 20 to 512 (LQQEDFVVNG…LKRLNGDTRK (493 aa)) the chain is on the lumenal side. Active-site residues include serine 179 and aspartate 381. N-linked (GlcNAc...) asparagine glycans are attached at residues asparagine 406 and asparagine 442. Histidine 445 is an active-site residue. The helical transmembrane segment at 513 to 533 (FTIAVFGLTISSIIGVIVYFS) threads the bilayer. Over 534-599 (MRLHYGAKIR…DISSSELHSV (66 aa)) the chain is Cytoplasmic.

This sequence belongs to the peptidase S10 family.

It is found in the golgi apparatus. Its subcellular location is the trans-Golgi network membrane. It catalyses the reaction Preferential release of a C-terminal arginine or lysine residue.. Protease with a carboxypeptidase B-like function involved in the C-terminal processing of the lysine and arginine residues from protein precursors. Promotes cell fusion and is involved in the programmed cell death. The chain is Pheromone-processing carboxypeptidase KEX1 (KEX1) from Eremothecium gossypii (strain ATCC 10895 / CBS 109.51 / FGSC 9923 / NRRL Y-1056) (Yeast).